A 1026-amino-acid polypeptide reads, in one-letter code: Leucine-rich repeat and coiled-coil domain-containing protein 1 (1026 aa).

5 LRR repeats span residues 39–60 (SIHAINLHCNNISKISSIDHIW), 61–82 (NLRHLDLSSNQISQIEGLNTLT), 83–104 (KLCTLNLSCNLITRVEGLEALV), 105–126 (NLTKLNLSYNHINDLSGLMPLH), and 131–152 (KLRYIDLHSNYIDSIHHLLQCT). Positions 170–212 (NPICLIPGYRAIILQTLPQLRILDCKNIFGEPVSLEEINSSHL) constitute an LRRCT domain. The tract at residues 310 to 338 (DNVPEKDLRPKRDTDITSESDYGNRRECS) is disordered. Residues 312–324 (VPEKDLRPKRDTD) are compositionally biased toward basic and acidic residues. Residues 428-641 (REMRWKAEQT…DLENEFRIAL (214 aa)) are a coiled coil.

It belongs to the LRRCC1 family.

It is found in the cytoplasm. Its subcellular location is the cytoskeleton. The protein localises to the microtubule organizing center. It localises to the centrosome. The protein resides in the centriole. Required for the organization of the mitotic spindle. Maintains the structural integrity of centrosomes during mitosis. This chain is Leucine-rich repeat and coiled-coil domain-containing protein 1 (Lrrcc1), found in Mus musculus (Mouse).